Here is a 459-residue protein sequence, read N- to C-terminus: Argininosuccinate lyase (459 aa).

The protein belongs to the lyase 1 family. Argininosuccinate lyase subfamily.

Its subcellular location is the cytoplasm. It carries out the reaction 2-(N(omega)-L-arginino)succinate = fumarate + L-arginine. Its pathway is amino-acid biosynthesis; L-arginine biosynthesis; L-arginine from L-ornithine and carbamoyl phosphate: step 3/3. This is Argininosuccinate lyase from Lactococcus lactis subsp. lactis (strain IL1403) (Streptococcus lactis).